The sequence spans 109 residues: U4-lycotoxin-Ls1a (109 aa).

Positions 1–22 (MKVLVLFSVLFLTLFSYSSTEA) are cleaved as a signal peptide. Positions 23–44 (IDEFDSDAEDDMLSLMANEQVR) are excised as a propeptide. A knottin domain region spans residues 45-88 (AKACTPRLHDCSHDRHSCCRGELFKDVCYCFYPEGEDKTEVCSC). Disulfide bonds link cysteine 48–cysteine 63, cysteine 55–cysteine 72, cysteine 62–cysteine 88, and cysteine 74–cysteine 86. The segment at 89-108 (QQPKSHKYIEKVVDKAKTVV) is linear cationic cytotoxin domain.

This sequence belongs to the neurotoxin 19 (CSTX) family. 05 (U4-Lctx) subfamily. As to expression, expressed by the venom gland.

Its subcellular location is the secreted. Functionally, enhances the high-affinity desensitization of human P2RX3 purinoceptors. The sequence is that of U4-lycotoxin-Ls1a from Lycosa singoriensis (Wolf spider).